The following is a 682-amino-acid chain: T-box brain protein 1 (682 aa).

2 disordered regions span residues 43 to 83 (TDNL…RSKL) and 108 to 127 (SQSSQPQSAATAPSAMFPYP). Residues 58–68 (GMTNQSDTDNF) are compositionally biased toward polar residues. A compositionally biased stretch (low complexity) spans 108–122 (SQSSQPQSAATAPSA). The segment at residues 213 to 393 (LWLKFHRHQT…HNPFAKGFRD (181 aa)) is a DNA-binding region (T-box). The residue at position 408 (threonine 408) is a Phosphothreonine. Serine 410 bears the Phosphoserine mark. 2 disordered regions span residues 447–483 (PGAGAGPGPGTDRSVPHTNGLLSPQQAEDPGAPSPQR) and 588–658 (GLAA…KSEV). Residues 462-472 (PHTNGLLSPQQ) show a composition bias toward polar residues. At serine 594 the chain carries Phosphoserine. Positions 619 to 629 (SSIKSIDSSDS) are enriched in low complexity. A Phosphoserine modification is found at serine 641.

In terms of assembly, homodimer. Part of a complex containing CASK, TBR1 and TSPYL2; may modulate gene expression in response to neuronal synaptic activity. Interacts with FOXP2. Interacts with FOXP1. Interacts with BCL11A. As to expression, brain.

It localises to the nucleus. Transcriptional repressor involved in multiple aspects of cortical development, including neuronal migration, laminar and areal identity, and axonal projection. As transcriptional repressor of FEZF2, it blocks the formation of the corticospinal (CS) tract from layer 6 projection neurons, thereby restricting the origin of CS axons specifically to layer 5 neurons. The protein is T-box brain protein 1 (TBR1) of Homo sapiens (Human).